Consider the following 116-residue polypeptide: NADH-ubiquinone oxidoreductase chain 3 (116 aa).

Helical transmembrane passes span 4 to 24 (LIIT…IAFW), 56 to 76 (FFLI…LLPL), and 88 to 108 (TLIL…YEWI).

It belongs to the complex I subunit 3 family. Core subunit of respiratory chain NADH dehydrogenase (Complex I) which is composed of 45 different subunits. Interacts with TMEM186. Interacts with TMEM242.

Its subcellular location is the mitochondrion inner membrane. It catalyses the reaction a ubiquinone + NADH + 5 H(+)(in) = a ubiquinol + NAD(+) + 4 H(+)(out). Functionally, core subunit of the mitochondrial membrane respiratory chain NADH dehydrogenase (Complex I) which catalyzes electron transfer from NADH through the respiratory chain, using ubiquinone as an electron acceptor. Essential for the catalytic activity of complex I. This is NADH-ubiquinone oxidoreductase chain 3 from Osphranter robustus (Wallaroo).